The chain runs to 30 residues: Thylakoid lumenal 17 kDa protein (30 aa).

Its subcellular location is the plastid. It is found in the chloroplast thylakoid lumen. In Spinacia oleracea (Spinach), this protein is Thylakoid lumenal 17 kDa protein.